A 78-amino-acid polypeptide reads, in one-letter code: Translational regulator CsrA (78 aa).

This sequence belongs to the CsrA/RsmA family. In terms of assembly, homodimer; the beta-strands of each monomer intercalate to form a hydrophobic core, while the alpha-helices form wings that extend away from the core.

The protein localises to the cytoplasm. In terms of biological role, a translational regulator that binds mRNA to regulate translation initiation and/or mRNA stability. Usually binds in the 5'-UTR at or near the Shine-Dalgarno sequence preventing ribosome-binding, thus repressing translation. Its main target seems to be the major flagellin gene, while its function is anatagonized by FliW. This chain is Translational regulator CsrA, found in Borrelia hermsii (strain HS1 / DAH).